Consider the following 126-residue polypeptide: S-adenosylmethionine decarboxylase proenzyme (126 aa).

Residue Ser63 is the Schiff-base intermediate with substrate; via pyruvic acid of the active site. Pyruvic acid (Ser); by autocatalysis is present on Ser63. Catalysis depends on His68, which acts as the Proton acceptor; for processing activity. Cys83 functions as the Proton donor; for catalytic activity in the catalytic mechanism.

The protein belongs to the prokaryotic AdoMetDC family. Type 1 subfamily. Heterotetramer of two alpha and two beta chains arranged as a dimer of alpha/beta heterodimers. Pyruvate is required as a cofactor. In terms of processing, is synthesized initially as an inactive proenzyme. Formation of the active enzyme involves a self-maturation process in which the active site pyruvoyl group is generated from an internal serine residue via an autocatalytic post-translational modification. Two non-identical subunits are generated from the proenzyme in this reaction, and the pyruvate is formed at the N-terminus of the alpha chain, which is derived from the carboxyl end of the proenzyme. The post-translation cleavage follows an unusual pathway, termed non-hydrolytic serinolysis, in which the side chain hydroxyl group of the serine supplies its oxygen atom to form the C-terminus of the beta chain, while the remainder of the serine residue undergoes an oxidative deamination to produce ammonia and the pyruvoyl group blocking the N-terminus of the alpha chain.

The enzyme catalyses S-adenosyl-L-methionine + H(+) = S-adenosyl 3-(methylsulfanyl)propylamine + CO2. The protein operates within amine and polyamine biosynthesis; S-adenosylmethioninamine biosynthesis; S-adenosylmethioninamine from S-adenosyl-L-methionine: step 1/1. In terms of biological role, catalyzes the decarboxylation of S-adenosylmethionine to S-adenosylmethioninamine (dcAdoMet), the propylamine donor required for the synthesis of the polyamines spermine and spermidine from the diamine putrescine. This chain is S-adenosylmethionine decarboxylase proenzyme, found in Pelotomaculum thermopropionicum (strain DSM 13744 / JCM 10971 / SI).